The primary structure comprises 616 residues: Glutamine--fructose-6-phosphate aminotransferase [isomerizing] (616 aa).

The Nucleophile; for GATase activity role is filled by cysteine 2. Positions 2–222 constitute a Glutamine amidotransferase type-2 domain; the sequence is CGIIGYSGPR…QERIVALSGD (221 aa). The interval 70–89 is disordered; sequence TGIGHTRWATHGEPSDRNAH. SIS domains lie at 289–428 and 461–606; these read IRDD…LRGF and LAHW…VDRP. Lysine 611 acts as the For Fru-6P isomerization activity in catalysis.

In terms of assembly, homodimer.

It is found in the cytoplasm. The catalysed reaction is D-fructose 6-phosphate + L-glutamine = D-glucosamine 6-phosphate + L-glutamate. Catalyzes the first step in hexosamine metabolism, converting fructose-6P into glucosamine-6P using glutamine as a nitrogen source. The protein is Glutamine--fructose-6-phosphate aminotransferase [isomerizing] of Tropheryma whipplei (strain TW08/27) (Whipple's bacillus).